Reading from the N-terminus, the 248-residue chain is 5'-nucleotidase SurE (248 aa).

Residues Asp8, Asp9, Ser39, and Asn91 each coordinate a divalent metal cation.

This sequence belongs to the SurE nucleotidase family. A divalent metal cation is required as a cofactor.

The protein localises to the cytoplasm. It carries out the reaction a ribonucleoside 5'-phosphate + H2O = a ribonucleoside + phosphate. Functionally, nucleotidase that shows phosphatase activity on nucleoside 5'-monophosphates. The sequence is that of 5'-nucleotidase SurE from Neisseria meningitidis serogroup B (strain ATCC BAA-335 / MC58).